The primary structure comprises 360 residues: Phenylalanine--tRNA ligase alpha subunit (360 aa).

E260 contributes to the Mg(2+) binding site.

This sequence belongs to the class-II aminoacyl-tRNA synthetase family. Phe-tRNA synthetase alpha subunit type 1 subfamily. In terms of assembly, tetramer of two alpha and two beta subunits. The cofactor is Mg(2+).

Its subcellular location is the cytoplasm. The catalysed reaction is tRNA(Phe) + L-phenylalanine + ATP = L-phenylalanyl-tRNA(Phe) + AMP + diphosphate + H(+). This Bradyrhizobium sp. (strain ORS 278) protein is Phenylalanine--tRNA ligase alpha subunit.